The sequence spans 535 residues: Major glycerophosphoinositol permease GIT3 (535 aa).

Residues 49-69 form a helical membrane-spanning segment; sequence VVTSVKANSLWPAFASGAGLF. Asn75 carries an N-linked (GlcNAc...) asparagine glycan. 5 helical membrane-spanning segments follow: residues 101–121, 137–157, 165–185, 204–224, and 232–252; these read NIAS…GYIS, LIFF…QGFF, FFLG…ASEF, AMID…IWIF, and LWRV…FMRL. An N-linked (GlcNAc...) asparagine glycan is attached at Asn256. A run of 6 helical transmembrane segments spans residues 275–295, 324–344, 352–372, 378–398, 419–439, and 455–475; these read WWLI…IWFI, WGWS…GAIS, LTLA…SACL, HIAG…FGPG, GIAA…FPAI, and VPFY…IFFC. A glycan (N-linked (GlcNAc...) asparagine) is linked at Asn532.

It belongs to the major facilitator superfamily. Sugar transporter (TC 2.A.1.1) family.

It localises to the cell membrane. It carries out the reaction sn-glycerol 3-phosphocholine(out) = sn-glycerol 3-phosphocholine(in). Glycerophosphodiester transporter that mediates uptake of glycerophosphocholine (GroPCho) with GIT4. GIT3 acts as the major GroPCho permease. Does not possess detectable glycerophosphoinositol (GroPIns) transport activity. The expanded ability to utilize GroPIns and GroPCho results from the organism's pathogenic nature and its need to occupy a variety of environments within its host organism. This possibility is buttressed by the fact that GroPIns and GroPCho are present and abundant in human fluids. The protein is Major glycerophosphoinositol permease GIT3 of Candida albicans (strain SC5314 / ATCC MYA-2876) (Yeast).